A 104-amino-acid chain; its full sequence is MAAKIRREDEVIVLAGKDQGKRGKVSQVLPTGKLIVEGINLVKKHQKPNPQLGVAGGIVEQEAPIQASNVAIFNSATGKADRVGFRFEDGQKVRFFKSNSELVK.

Belongs to the universal ribosomal protein uL24 family. In terms of assembly, part of the 50S ribosomal subunit.

In terms of biological role, one of two assembly initiator proteins, it binds directly to the 5'-end of the 23S rRNA, where it nucleates assembly of the 50S subunit. Its function is as follows. One of the proteins that surrounds the polypeptide exit tunnel on the outside of the subunit. The protein is Large ribosomal subunit protein uL24 of Shewanella sediminis (strain HAW-EB3).